The sequence spans 222 residues: Ribosomal RNA small subunit methyltransferase I (222 aa).

The protein belongs to the methyltransferase superfamily. RsmI family.

The protein resides in the cytoplasm. It carries out the reaction cytidine(1402) in 16S rRNA + S-adenosyl-L-methionine = 2'-O-methylcytidine(1402) in 16S rRNA + S-adenosyl-L-homocysteine + H(+). Its function is as follows. Catalyzes the 2'-O-methylation of the ribose of cytidine 1402 (C1402) in 16S rRNA. The protein is Ribosomal RNA small subunit methyltransferase I of Thermotoga maritima (strain ATCC 43589 / DSM 3109 / JCM 10099 / NBRC 100826 / MSB8).